The primary structure comprises 68 residues: Large ribosomal subunit protein bL35 (68 aa).

The protein belongs to the bacterial ribosomal protein bL35 family.

The sequence is that of Large ribosomal subunit protein bL35 from Wolbachia pipientis subsp. Culex pipiens (strain wPip).